The following is a 202-amino-acid chain: MSTLSPRRSAILTFIRDRIAQQGQSPSLAEISEAFGFASRSVARKHIVALTEAGLIEVVAHQARGIRLLNSEPRPELLEIPVLGRVAAGAPIGPDLDIHTTLHLDRSTFTRVPDYLLRVQGDSMIEDGILDGDLVGVHRNPQASDGQIVVARLEGEVTIKRLQHRGDQLHLLPRNPAYQPIIVTPDQDFAIEGVFCGLVRRE.

The H-T-H motif DNA-binding region spans 28–48 (LAEISEAFGFASRSVARKHIV). Residues serine 123 and lysine 160 each act as for autocatalytic cleavage activity in the active site.

This sequence belongs to the peptidase S24 family. Homodimer.

The catalysed reaction is Hydrolysis of Ala-|-Gly bond in repressor LexA.. Represses a number of genes involved in the response to DNA damage (SOS response), including recA and lexA. In the presence of single-stranded DNA, RecA interacts with LexA causing an autocatalytic cleavage which disrupts the DNA-binding part of LexA, leading to derepression of the SOS regulon and eventually DNA repair. In Pseudomonas syringae pv. tomato (strain ATCC BAA-871 / DC3000), this protein is LexA repressor 2.